The sequence spans 214 residues: Protein get-1 (214 aa).

Over 1 to 4 (MPSL) the chain is Lumenal. A helical transmembrane segment spans residues 5 to 24 (LVVIFVIELFVQLVNTIGAA). Topologically, residues 25–110 (TINNLLWRIA…KFDRTLTTVR (86 aa)) are cytoplasmic. The stretch at 73–107 (KWARLRRQHDKLLEDLEKRKKELDAAKTKFDRTLT) forms a coiled coil. A helical membrane pass occupies residues 111–131 (VVATRGLQWFLPFWYSREPMF). Over 132–155 (WLPYGWFPYYVEWFASFPRAPLGS) the chain is Lumenal. A helical membrane pass occupies residues 156–172 (VSIVVWQWACTGVIKLV). Topologically, residues 173–214 (IETVMAVVGLIVAARQKQQEKQKAKQAVPAAGGGDSKAEEAK) are cytoplasmic. Positions 190–214 (QQEKQKAKQAVPAAGGGDSKAEEAK) are disordered.

It belongs to the WRB/GET1 family. Interacts with GET3.

Its subcellular location is the endoplasmic reticulum membrane. Functionally, required for the post-translational delivery of tail-anchored (TA) proteins to the endoplasmic reticulum. Acts as a membrane receptor for soluble GET3, which recognizes and selectively binds the transmembrane domain of TA proteins in the cytosol. This Neurospora crassa (strain ATCC 24698 / 74-OR23-1A / CBS 708.71 / DSM 1257 / FGSC 987) protein is Protein get-1 (get-1).